The chain runs to 220 residues: QLNMALMLFLAPSSDELDHVLGEQPYYDIDDVRLTFSPKDFIQVNRDVNVKMVEQAINWLDIQPQDRVLDLFCGLGNFSLPLARRAKAVVGVEGVDEMVARATANAAANGLDNATFYQANLDEDVTKLVWAQEQFDKILLDPARAGAAGVMQHIVNLAPSKVVYVSCNPATLARDSQMLLQQGYKLARLGMMDMFPHTGHLESMTLFVKTNHHKKNSNVM.

S-adenosyl-L-methionine-binding residues include Gln43, Phe72, Asn77, Glu93, Asn120, and Asp141. Cys167 acts as the Nucleophile in catalysis.

The protein belongs to the class I-like SAM-binding methyltransferase superfamily. RNA M5U methyltransferase family. RlmD subfamily.

It carries out the reaction uridine(1939) in 23S rRNA + S-adenosyl-L-methionine = 5-methyluridine(1939) in 23S rRNA + S-adenosyl-L-homocysteine + H(+). In terms of biological role, catalyzes the formation of 5-methyl-uridine at position 1939 (m5U1939) in 23S rRNA. This is 23S rRNA (uracil(1939)-C(5))-methyltransferase RlmD (rlmD) from Photobacterium angustum (strain S14 / CCUG 15956) (Vibrio sp. (strain S14 / CCUG 15956)).